Consider the following 222-residue polypeptide: Nucleoside triphosphate pyrophosphatase (222 aa).

D82 serves as the catalytic Proton acceptor.

The protein belongs to the Maf family. A divalent metal cation is required as a cofactor.

It is found in the cytoplasm. It catalyses the reaction a ribonucleoside 5'-triphosphate + H2O = a ribonucleoside 5'-phosphate + diphosphate + H(+). The catalysed reaction is a 2'-deoxyribonucleoside 5'-triphosphate + H2O = a 2'-deoxyribonucleoside 5'-phosphate + diphosphate + H(+). Functionally, nucleoside triphosphate pyrophosphatase. May have a dual role in cell division arrest and in preventing the incorporation of modified nucleotides into cellular nucleic acids. This Mycobacterium bovis (strain ATCC BAA-935 / AF2122/97) protein is Nucleoside triphosphate pyrophosphatase.